A 580-amino-acid chain; its full sequence is Arginine--tRNA ligase (580 aa).

Positions 127–137 (PNTHKELHVGH) match the 'HIGH' region motif.

Belongs to the class-I aminoacyl-tRNA synthetase family. Monomer.

The protein localises to the cytoplasm. It catalyses the reaction tRNA(Arg) + L-arginine + ATP = L-arginyl-tRNA(Arg) + AMP + diphosphate. This Bdellovibrio bacteriovorus (strain ATCC 15356 / DSM 50701 / NCIMB 9529 / HD100) protein is Arginine--tRNA ligase.